A 92-amino-acid polypeptide reads, in one-letter code: Acylphosphatase (92 aa).

The Acylphosphatase-like domain maps to 5–90 (TWRLVAHGRV…GEFAGFEFRP (86 aa)). Active-site residues include R20 and N38.

This sequence belongs to the acylphosphatase family.

It catalyses the reaction an acyl phosphate + H2O = a carboxylate + phosphate + H(+). The sequence is that of Acylphosphatase (acyP) from Cupriavidus necator (strain ATCC 17699 / DSM 428 / KCTC 22496 / NCIMB 10442 / H16 / Stanier 337) (Ralstonia eutropha).